Reading from the N-terminus, the 411-residue chain is Protein translocase subunit SecY (411 aa).

The next 10 helical transmembrane spans lie at 11–31, 52–72, 111–131, 135–155, 163–180, 197–217, 253–273, 291–311, 349–369, and 377–397; these read IIFTLFLLVLARLGIFIPVPG, IFSGGGFSTIGIFALGIVPYI, ALGWATLQSGAISIWVKPYVF, FAFVCESVLALTAGSMIIMWL, GIGNGASLLIFQNIVSGL, SLKFGLFIAIFLLMIIITICV, VMPIVFASASMALPSYLTQII, LYLLLYCALILFFSYFYTSIV, TFLGASFLFTVALIPFIIEKV, and GLGATSLLILVGVAIDTAKQI.

The protein belongs to the SecY/SEC61-alpha family. As to quaternary structure, component of the plastid Sec protein translocase complex, which is composed of at least SecY, SecE and SecG.

The protein localises to the plastid. It localises to the chloroplast thylakoid membrane. The central subunit of the protein translocation channel SecYE. Consists of two halves formed by TMs 1-5 and 6-10. These two domains form a lateral gate at the front which open onto the bilayer between TMs 2 and 7, and are clamped together by SecE at the back. The channel is closed by both a pore ring composed of hydrophobic SecY resides and a short helix (helix 2A) on the extracellular side of the membrane which forms a plug. The chain is Protein translocase subunit SecY from Pyropia yezoensis (Susabi-nori).